Consider the following 373-residue polypeptide: Caspase-4 (373 aa).

The required for LPS-binding stretch occupies residues 1 to 59 (MAENKHPDKPLKVLEQLGKEVLTEYLEKLVQSNVLKLKEEDKQKFNNAERSDKRWVFVD). A propeptide spanning residues 1–80 (MAENKHPDKP…MLLQTFFSVD (80 aa)) is cleaved from the precursor. In terms of domain architecture, CARD spans 1–91 (MAENKHPDKP…GSHHGEANLE (91 aa)). Ser-83 is modified (phosphoserine). Residues His-206 and Cys-254 contribute to the active site. Positions 267 to 285 (SSKPQLCRGVDLPRNMEAD) are excised as a propeptide. Arg-310 is subject to (Microbial infection) ADP-riboxanated arginine.

The protein belongs to the peptidase C14A family. As to quaternary structure, heterotetramer that consists of two anti-parallel arranged heterodimers, each one formed by a 20 kDa (Caspase-4 subunit p20) and a 10 kDa (Caspase-4 subunit p10) subunit. Upon direct LPS-binding, forms large homooligomers, resulting in its activation. These oligomers are often referred to as 'non-canonical inflammasomes'. In its precursor form, interacts with TMEM214; this interaction is required for association with the endoplasmic reticulum membrane. Interacts with CASP1. Interacts with NOD2. Interacts with Serpinb1a, Serpinb1b and Serpinb1c; these interactions regulate CASP4 activity. Heterotetramer that consists of two anti-parallel arranged heterodimers, each one formed by a 20 kDa (Caspase-4 subunit p20) and a 10 kDa (Caspase-4 subunit p10) subunit. Post-translationally, in response to activation signals, undergoes autoproteolytic cleavage and activation. (Microbial infection) ADP-riboxanation by S.flexneri OspC3 blocks CASP4 autoprocessing, preventing CASP4 activation and ability to recognize and cleave GSDMD, thereby thwarting the inflammasome/pyroptosis-mediated defense. Widely expressed, including in thymus, lung and spleen (at protein level). Very low levels, if any, in the brain.

The protein resides in the cytoplasm. It localises to the cytosol. It is found in the endoplasmic reticulum membrane. Its subcellular location is the mitochondrion. The protein localises to the inflammasome. The protein resides in the secreted. The enzyme catalyses Strict requirement for Asp at the P1 position and has a preferred cleavage sequence of (Ile/Leu/Val/Phe)-Gly-His-Asp-|-.. Activated by homooligomerization induced by direct binding to cytosolic LPS, in a TLR4-independent manner. In addition to LPS, CASP4/CASP11 may also be activated by oxidized phospholipid 1-palmitoyl-2-arachidonoyl- sn-glycero-3-phosphorylcholine, an oxidized phospholipid (oxPAPC), in dendritic cells, promoting adaptive immunity. The role of oxPAPC is however unclear and another report suggests that oxPAPC competes with LPS-binding and inhibits the non-canonical inflammasome in macrophages. Its function is as follows. Inflammatory caspase that acts as the effector of the non-canonical inflammasome by mediating lipopolysaccharide (LPS)-induced pyroptosis. Also indirectly activates the NLRP3 and NLRP6 inflammasomes. Acts as a thiol protease that cleaves a tetrapeptide after an Asp residue at position P1: catalyzes cleavage of CGAS and GSDMD. In contrast to its human ortholog, does not cleave IL18. Effector of the non-canonical inflammasome independently of NLRP3 inflammasome and CASP1: the non-canonical inflammasome promotes pyroptosis through GSDMD cleavage without involving secretion of cytokine IL1B and IL18. In the non-canonical inflammasome, CASP4/CASP11 is activated by direct binding to the lipid A moiety of LPS without the need of an upstream sensor. LPS-binding promotes CASP4/CASP11 activation and CASP4/CASP11-mediated cleavage of GSDMD, followed by pyroptosis of infected cells and their extrusion into the gut lumen. Also indirectly promotes secretion of mature cytokines (IL1A, IL18 and HMGB1) downstream of GSDMD-mediated pyroptosis via activation of the NLRP3 and NLRP6 inflammasomes. Involved in NLRP3-dependent CASP1 activation and IL1B and IL18 secretion in response to non-canonical activators, such as UVB radiation or cholera enterotoxin. Involved in NLRP6 inflammasome-dependent activation in response to lipoteichoic acid (LTA), a cell-wall component of Gram-positive bacteria, which leads to CASP1 activation and IL1B and IL18 secretion. Involved in LPS-induced IL6 secretion; this activity may not require caspase enzymatic activity. The non-canonical inflammasome is required for innate immunity to cytosolic, but not vacuolar, bacteria. Plays a crucial role in the restriction of S.typhimurium replication in colonic epithelial cells during infection. Activation of the non-canonical inflammasome in brain endothelial cells can lead to excessive pyroptosis, leading to blood-brain barrier breakdown. Pyroptosis limits bacterial replication, while cytokine secretion promotes the recruitment and activation of immune cells and triggers mucosal inflammation. May also act as an activator of adaptive immunity in dendritic cells, following activation by oxidized phospholipid 1-palmitoyl-2-arachidonoyl- sn-glycero-3-phosphorylcholine, an oxidized phospholipid (oxPAPC). Cleavage of GSDMD is not strictly dependent on the consensus cleavage site but depends on an exosite interface on CASP4/CASP11 that recognizes and binds the Gasdermin-D, C-terminal (GSDMD-CT) part. In contrast, it does not directly process IL1B. During non-canonical inflammasome activation, cuts CGAS and may play a role in the regulation of antiviral innate immune activation. The chain is Caspase-4 from Mus musculus (Mouse).